Consider the following 168-residue polypeptide: Acetone carboxylase gamma subunit (168 aa).

As to quaternary structure, heterohexamer of two alpha, two beta and two gamma subunits. Requires Fe cation as cofactor. It depends on Mg(2+) as a cofactor. Zn(2+) is required as a cofactor.

The enzyme catalyses acetone + hydrogencarbonate + 2 ATP + 3 H2O = acetoacetate + 2 AMP + 4 phosphate + 4 H(+). Functionally, catalyzes the carboxylation of acetone to form acetoacetate. Has a reduced activity on butanone, and no activity on 2-pentatone, 3-pentatone, 2-hexanone, chloroacetone, pyruvate, phosphoenolpyruvate, acetaldehyde, propionaldehyde and propylene oxide. This Xanthobacter autotrophicus (strain ATCC BAA-1158 / Py2) protein is Acetone carboxylase gamma subunit.